A 511-amino-acid polypeptide reads, in one-letter code: Maturase K (511 aa).

This sequence belongs to the intron maturase 2 family. MatK subfamily.

It localises to the plastid. It is found in the chloroplast. In terms of biological role, usually encoded in the trnK tRNA gene intron. Probably assists in splicing its own and other chloroplast group II introns. This chain is Maturase K, found in Mandragora officinarum (Mandrake).